A 223-amino-acid polypeptide reads, in one-letter code: Ribonuclease 3 (223 aa).

The RNase III domain occupies 4–127 (LENLQKLLGY…VMGAVYLEAG (124 aa)). Glu-40 contacts Mg(2+). Asp-44 is a catalytic residue. Mg(2+) is bound by residues Asp-113 and Glu-116. Residue Glu-116 is part of the active site. In terms of domain architecture, DRBM spans 154-223 (DYKTALQEIT…AKIALEKMKK (70 aa)).

It belongs to the ribonuclease III family. As to quaternary structure, homodimer. Mg(2+) serves as cofactor.

The protein localises to the cytoplasm. It catalyses the reaction Endonucleolytic cleavage to 5'-phosphomonoester.. In terms of biological role, digests double-stranded RNA. Involved in the processing of primary rRNA transcript to yield the immediate precursors to the large and small rRNAs (23S and 16S). Processes some mRNAs, and tRNAs when they are encoded in the rRNA operon. Processes pre-crRNA and tracrRNA of type II CRISPR loci if present in the organism. The sequence is that of Ribonuclease 3 from Campylobacter curvus (strain 525.92).